The chain runs to 455 residues: Ribulose bisphosphate carboxylase large chain (455 aa).

At Lys-5 the chain carries N6,N6,N6-trimethyllysine. Substrate contacts are provided by Asn-114 and Thr-164. Residue Lys-166 is the Proton acceptor of the active site. Lys-168 contributes to the substrate binding site. Residues Lys-192, Asp-194, and Glu-195 each contribute to the Mg(2+) site. At Lys-192 the chain carries N6-carboxylysine. His-285 functions as the Proton acceptor in the catalytic mechanism. The substrate site is built by Arg-286, His-318, and Ser-370.

This sequence belongs to the RuBisCO large chain family. Type I subfamily. As to quaternary structure, heterohexadecamer of 8 large chains and 8 small chains; disulfide-linked. The disulfide link is formed within the large subunit homodimers. Requires Mg(2+) as cofactor. The disulfide bond which can form in the large chain dimeric partners within the hexadecamer appears to be associated with oxidative stress and protein turnover.

It localises to the plastid. It is found in the chloroplast. It catalyses the reaction 2 (2R)-3-phosphoglycerate + 2 H(+) = D-ribulose 1,5-bisphosphate + CO2 + H2O. The catalysed reaction is D-ribulose 1,5-bisphosphate + O2 = 2-phosphoglycolate + (2R)-3-phosphoglycerate + 2 H(+). Its function is as follows. RuBisCO catalyzes two reactions: the carboxylation of D-ribulose 1,5-bisphosphate, the primary event in carbon dioxide fixation, as well as the oxidative fragmentation of the pentose substrate in the photorespiration process. Both reactions occur simultaneously and in competition at the same active site. This is Ribulose bisphosphate carboxylase large chain from Lupinus microcarpus (Chick lupine).